A 631-amino-acid chain; its full sequence is MRRPKKYEAGEATQYISRRAAIRKLQLSLNDFRRLCILKGVYPREPKHRRRAQKGSSEIKILYHTKDIRFLLHESIVWTLRDYKIFAKKTSRDRAIKDFRNLKRRLALFPEIKLDHIVKERYPTFIDALKDLDDCLTLLFLFSTFPSLHLIPREQSNLCRRLTIEFLHYVIASKSLRKVFISIKGYYFQAEIKGQKVTWIMPHYYPFKPQSRQEVDFKVMSIFVEFYTILQGFTNFRLFHGLNLAYPPQFPSSLLQDNEDTFKDEASFVSDRIAALNFELLRTDKVQEDEEEPDIDMELLEQDGDSKRIIKMKQEAQEVSRLRTLFKGLKFFINREVPREPLVILIRSFGGKVSWDASVFPGATFAENDETITHQIVDRPSLSTQYISRDYIQPQWLFDCVNQRQLLPTNDYFLGETLPPHLSPFVDSKRDSYIPPEEKALHDPSLIETHEQSEEESEEDEAEKEEEEADQELLDAQLQLAYQQETAEYKKYGGPDGVNEDEEDLSEEDDEEDDDEEDVDKEDVDEQTKRKQQEKEKMSVQSGKVHKVNKRQVHKAEVDEHRLQARMVKPRHRNLFRKLIREKQTKEKEEWLLRKKRRNIDADTKEAKKAAKREARKLAAEAAARAAKLVK.

Residues 321 to 414 (RLRTLFKGLK…QLLPTNDYFL (94 aa)) form the BRCT domain. Residues 428–442 (SKRDSYIPPEEKALH) show a composition bias toward basic and acidic residues. Disordered regions lie at residues 428–471 (SKRD…EADQ) and 489–560 (YKKY…EVDE). Phosphoserine occurs at positions 453 and 457. Acidic residues-rich tracts occupy residues 453-471 (SEEESEEDEAEKEEEEADQ) and 498-525 (VNEDEEDLSEEDDEEDDDEEDVDKEDVD). Basic and acidic residues predominate over residues 526 to 538 (EQTKRKQQEKEKM). Residues 544–553 (KVHKVNKRQV) show a composition bias toward basic residues. Residues 593–629 (LRKKRRNIDADTKEAKKAAKREARKLAAEAAARAAKL) are a coiled coil.

This sequence belongs to the pescadillo family.

It is found in the nucleus. It localises to the nucleolus. The protein localises to the nucleoplasm. Its function is as follows. Required for maturation of ribosomal RNAs and formation of the large ribosomal subunit. The polypeptide is Pescadillo homolog (Drosophila persimilis (Fruit fly)).